Here is a 264-residue protein sequence, read N- to C-terminus: Putative hydroxypyruvate isomerase (264 aa).

Active-site proton donor/acceptor residues include Glu-145 and Glu-243.

Belongs to the hyi family.

The enzyme catalyses 3-hydroxypyruvate = 2-hydroxy-3-oxopropanoate. Catalyzes the reversible isomerization between hydroxypyruvate and 2-hydroxy-3-oxopropanoate (also termed tartronate semialdehyde). This chain is Putative hydroxypyruvate isomerase (Gip), found in Drosophila melanogaster (Fruit fly).